The following is a 337-amino-acid chain: Mycothiol acetyltransferase (337 aa).

N-acetyltransferase domains follow at residues 11–151 (LDER…FELP) and 154–337 (VRLR…MYRK). Residue glutamate 37 coordinates 1D-myo-inositol 2-(L-cysteinylamino)-2-deoxy-alpha-D-glucopyranoside. Acetyl-CoA is bound at residue 81–83 (LVI). Residue glutamate 182 participates in 1D-myo-inositol 2-(L-cysteinylamino)-2-deoxy-alpha-D-glucopyranoside binding. The disordered stretch occupies residues 210-246 (RPTGSGDGDVADGGSTDGGPADSGSADGGAGEGGTGD). A compositionally biased stretch (low complexity) spans 221–234 (DGGSTDGGPADSGS). The segment covering 235 to 246 (ADGGAGEGGTGD) has biased composition (gly residues). Lysine 257 and glutamate 271 together coordinate 1D-myo-inositol 2-(L-cysteinylamino)-2-deoxy-alpha-D-glucopyranoside. Residues 275–277 (VGV) and 282–288 (QGGGLGR) contribute to the acetyl-CoA site. Tyrosine 309 contributes to the 1D-myo-inositol 2-(L-cysteinylamino)-2-deoxy-alpha-D-glucopyranoside binding site. Position 314–319 (314–319 (NTAAIR)) interacts with acetyl-CoA.

Belongs to the acetyltransferase family. MshD subfamily. In terms of assembly, monomer.

It catalyses the reaction 1D-myo-inositol 2-(L-cysteinylamino)-2-deoxy-alpha-D-glucopyranoside + acetyl-CoA = mycothiol + CoA + H(+). In terms of biological role, catalyzes the transfer of acetyl from acetyl-CoA to desacetylmycothiol (Cys-GlcN-Ins) to form mycothiol. This Streptosporangium roseum (strain ATCC 12428 / DSM 43021 / JCM 3005 / KCTC 9067 / NCIMB 10171 / NRRL 2505 / NI 9100) protein is Mycothiol acetyltransferase.